We begin with the raw amino-acid sequence, 730 residues long: Ribosomal RNA large subunit methyltransferase K/L (730 aa).

The region spanning 46–157 (TAYRLCVWSR…RGEAILSLDL (112 aa)) is the THUMP domain. Residues 394–418 (GERREAQPEGTEARQQVPQASEPAR) form a disordered region.

Belongs to the methyltransferase superfamily. RlmKL family.

It is found in the cytoplasm. It catalyses the reaction guanosine(2445) in 23S rRNA + S-adenosyl-L-methionine = N(2)-methylguanosine(2445) in 23S rRNA + S-adenosyl-L-homocysteine + H(+). The enzyme catalyses guanosine(2069) in 23S rRNA + S-adenosyl-L-methionine = N(2)-methylguanosine(2069) in 23S rRNA + S-adenosyl-L-homocysteine + H(+). Functionally, specifically methylates the guanine in position 2445 (m2G2445) and the guanine in position 2069 (m7G2069) of 23S rRNA. The chain is Ribosomal RNA large subunit methyltransferase K/L from Pseudomonas putida (strain ATCC 700007 / DSM 6899 / JCM 31910 / BCRC 17059 / LMG 24140 / F1).